Consider the following 485-residue polypeptide: MSKRSLDPSDDFKGQKRLAIDPESTALEQDRQMLQQLSEQNSELEPQNVAPNAEIPLGFDLSGIQFNMTPDFYLRMNQGMDYAFNQPNPIATPQQLLRTSLIPTLGNLSNIILSILGKPVQEASAIVTNPASEMGMAFTKVMNMFRMVKDIYTEESFIYSSAIGMRTPSQRSTTRRANLAIFLAAVYGALQIGFFHLNENFLEVFAPDESNILTNQGTLYMELKTQAYISAMAQAERPKGDILNDLFPSDMAHRFLIRRNAKLDDKLTYVEKQIIEKCTARKERLANFSPQEALNEVYPWGKFLSEIACYIHNNYSSISAIPIPANSFKRRSKKNGLRFKAGEAESSPSESGSDLTDSLAFGIPSSTFDGSSETQNVSSVVLYDQVRHMTNNNLNNKRTRRVANRRSWTKEEEEALLDGLDLVKGPRWSQILELYGPGGKKSEVLKYRNQVQLKDKARNMKLFFLKSGQVVPAALQCVTGDLRRD.

A compositionally biased stretch (basic and acidic residues) spans 1–20 (MSKRSLDPSDDFKGQKRLAI). The interval 1–23 (MSKRSLDPSDDFKGQKRLAIDPE) is disordered. Residues 400-457 (RRVANRRSWTKEEEEALLDGLDLVKGPRWSQILELYGPGGKKSEVLKYRNQVQLKDKA) enclose the HTH myb-type domain. Positions 428–453 (WSQILELYGPGGKKSEVLKYRNQVQL) form a DNA-binding region, H-T-H motif.

As to quaternary structure, homodimer.

It is found in the nucleus. Binds the telomeric double-stranded TTACAGG repeat and regulates telomere length. In Schizosaccharomyces pombe (strain 972 / ATCC 24843) (Fission yeast), this protein is Telomeric DNA-binding factor trf1 (trf1).